A 129-amino-acid chain; its full sequence is Small ribosomal subunit protein uS9 (129 aa).

The protein belongs to the universal ribosomal protein uS9 family.

This Thermoplasma acidophilum (strain ATCC 25905 / DSM 1728 / JCM 9062 / NBRC 15155 / AMRC-C165) protein is Small ribosomal subunit protein uS9 (rps9).